Here is a 147-residue protein sequence, read N- to C-terminus: Hemoglobin subunit epsilon-M (147 aa).

The region spanning 3-147 is the Globin domain; it reads HFTPEDKTNI…VSSALGHKYH (145 aa). Phosphoserine is present on residues Ser14 and Ser51. 2 residues coordinate heme b: His64 and His93.

It belongs to the globin family. As to expression, red blood cells.

Its function is as follows. Hemoglobin epsilon chain is a beta-type chain found in early embryos. This is Hemoglobin subunit epsilon-M (HBE1) from Didelphis virginiana (North American opossum).